Here is a 35-residue protein sequence, read N- to C-terminus: Tau/kappa-theraphotoxin-Pc1a (35 aa).

Cystine bridges form between Cys3–Cys17, Cys10–Cys22, and Cys16–Cys29. Phe35 is subject to Phenylalanine amide.

Belongs to the neurotoxin 10 (Hwtx-1) family. 62 (Vatx) subfamily. In terms of tissue distribution, expressed by the venom gland.

The protein localises to the secreted. In terms of biological role, selectively activates mammalian TRPV1, the capsaicin receptor, a non-selective cation channel expressed by sensory neurons of the pain pathway. Is less potent than VaTx2 and VaTx3. Interacts with distinct regions of the channel than capsaicin, since it only acts on the extracellular face of the channel, and capsaicin binds to the cytosolic side. Also activates avian TRPV1, which is insensitive to capsaicin. Significantly inhibits potassium channels Kv2.1/KCNB1. The polypeptide is Tau/kappa-theraphotoxin-Pc1a (Psalmopoeus cambridgei (Trinidad chevron tarantula)).